A 157-amino-acid chain; its full sequence is MSYNITSSNQYQYFAAMWAEPTAMLNQCVSALSQSYQTQAARDTVRQQFSNLLSAIVTPNQRFPETGYRMYINSAVLKPLYESLMKSFDTRNRIIETEEESRPSASEVANATQRVDDATVAIRSQIQLLLNELSNGHGLMNRAEFEVLLPWATAPAT.

An N-acetylserine; by host modification is found at S2.

This sequence belongs to the virgaviridae capsid protein family.

Its subcellular location is the virion. Capsid protein self-assembles to form rod-shaped virions about 18 nm in diameter with a central canal enclosing the viral genomic RNA. This Ribgrass mosaic virus (RMV) protein is Capsid protein (CP).